A 157-amino-acid chain; its full sequence is MKESILDVLLYLFEHYFSEDADLVRDRDSLQNGLIQAGFSPAEISKAFDWLDALAEQRPSVARPHVDGPVRIYHGPELDKLDVDCRGFLLFLEQHRILDADQRELVLDRAMALDQDELDLDDLKWVVLMVLFNQPGAEAAYAWMETQMFLDEPEPVH.

The protein belongs to the Smg family.

This is Protein Smg homolog from Xanthomonas campestris pv. campestris (strain 8004).